Consider the following 471-residue polypeptide: MSREMGELTQTRLQKIWIPHSSSSSVLQRRRGSSIPQFTNSPTMVIMVGLPARGKTYISTKLTRYLNWIGTPTKVFNLGQYRREAVSYRNYEFFRPDNTEAQLIRKQCALAALKDVHKYLSREEGHVAVFDATNTTRERRSLILQFAKEHGYKVFFIESICNDPEIIAENIKQVKLGSPDYIDCDQEKVLEDFLKRIECYEINYQPLDEELDSHLSYIKIFDVGTRYMVNRVQDHVQSRTAYYLMNIHVTPRSIYLCRHGESELNLRGRIGGDSGLSARGKQYAYALANFIRSQGISSLKVWTSHMKRTIQTAEALGVPYEQWKALNEIDAGVCEEMTYEEIQEHYPEEFALRDQDKYRYRYPKGESYEDLVQRLEPVIMELERQENVLVICHQAVMRCLLAYFLDKSSDELPYLKCPLHTVLKLTPVAYGCRVESIYLNVEAVNTHRDKPENVDITREAEEALDTVPAHY.

Position 2 is an N-acetylserine (serine 2). A 6-phosphofructo-2-kinase region spans residues 2–250 (SREMGELTQT…AYYLMNIHVT (249 aa)). Serine 33 carries the post-translational modification Phosphoserine; by PKA. Position 49–57 (49–57 (GLPARGKTY)) interacts with ATP. The beta-D-fructose 6-phosphate site is built by arginine 82 and arginine 105. Aspartate 131 is a catalytic residue. Beta-D-fructose 6-phosphate-binding residues include threonine 133 and arginine 139. Serine 141 bears the Phosphoserine mark. Cysteine 161 is a catalytic residue. 170–175 (NIKQVK) provides a ligand contact to ATP. Residues lysine 175, arginine 196, and tyrosine 200 each contribute to the beta-D-fructose 6-phosphate site. The interval 251–471 (PRSIYLCRHG…EALDTVPAHY (221 aa)) is fructose-2,6-bisphosphatase. Arginine 258 lines the beta-D-fructose 2,6-bisphosphate pocket. Histidine 259 serves as the catalytic Tele-phosphohistidine intermediate. Asparagine 265, glycine 271, and arginine 308 together coordinate beta-D-fructose 2,6-bisphosphate. The active-site Proton donor/acceptor is glutamate 328. Beta-D-fructose 2,6-bisphosphate is bound by residues tyrosine 339, arginine 353, lysine 357, tyrosine 368, glutamine 394, and arginine 398. An ATP-binding site is contributed by 350-353 (FALR). Residues 394-398 (QAVMR) and tyrosine 430 contribute to the ATP site.

This sequence in the C-terminal section; belongs to the phosphoglycerate mutase family. As to quaternary structure, homodimer. As to expression, liver.

It catalyses the reaction beta-D-fructose 2,6-bisphosphate + H2O = beta-D-fructose 6-phosphate + phosphate. The enzyme catalyses beta-D-fructose 6-phosphate + ATP = beta-D-fructose 2,6-bisphosphate + ADP + H(+). Phosphorylation at Ser-33 inhibits the kinase and activates the bisphosphatase. In terms of biological role, synthesis and degradation of fructose 2,6-bisphosphate. This is 6-phosphofructo-2-kinase/fructose-2,6-bisphosphatase 1 from Rattus norvegicus (Rat).